We begin with the raw amino-acid sequence, 118 residues long: UPF0102 protein Nwi_0116 (118 aa).

The protein belongs to the UPF0102 family.

The sequence is that of UPF0102 protein Nwi_0116 from Nitrobacter winogradskyi (strain ATCC 25391 / DSM 10237 / CIP 104748 / NCIMB 11846 / Nb-255).